A 256-amino-acid polypeptide reads, in one-letter code: MLEILQIPVLEDNYVYLLHEPGSGATAAVDPAVAGPVLEALDARGWRLGHVLNTHHHGDHVGGNLELKAATGCTVVGAAGDRHRIPGIDVALKDGEEFRLGSASARMLDVPGHTSGHVAFWFEDDAALFCGDTLFALGCGRLFEGSAEQMWRSLERLRALPAETKVFCAHEYTQANARFAVTIEPGNAALRERVERVEALRREGAATVPSILSEELATNPFLRPESPEIRARLGLPGVPEVEVFAEIRRRKDVFRG.

Zn(2+)-binding residues include His-55, His-57, Asp-59, His-60, His-113, Asp-132, and His-170.

Belongs to the metallo-beta-lactamase superfamily. Glyoxalase II family. In terms of assembly, monomer. The cofactor is Zn(2+).

It carries out the reaction an S-(2-hydroxyacyl)glutathione + H2O = a 2-hydroxy carboxylate + glutathione + H(+). It participates in secondary metabolite metabolism; methylglyoxal degradation; (R)-lactate from methylglyoxal: step 2/2. Its function is as follows. Thiolesterase that catalyzes the hydrolysis of S-D-lactoyl-glutathione to form glutathione and D-lactic acid. This chain is Hydroxyacylglutathione hydrolase, found in Methylococcus capsulatus (strain ATCC 33009 / NCIMB 11132 / Bath).